Reading from the N-terminus, the 800-residue chain is Small ribosomal subunit protein uS3c (800 aa).

Residues 1-118 (MGQKVHPSGF…LQVKKDILVK (118 aa)) form an S3-like 1st part region. Residues 119–664 (LQKTRQYLTN…FLDCKFEELE (546 aa)) form an intervening sequence (IVS) region. An S3-like 2nd part region spans residues 665–800 (RRKTMWVQNL…TKLVTESTGA (136 aa)).

The protein belongs to the universal ribosomal protein uS3 family. In terms of assembly, part of the 30S ribosomal subunit.

The protein localises to the plastid. It localises to the chloroplast. The protein is Small ribosomal subunit protein uS3c (rps3) of Chlamydomonas moewusii (Chlamydomonas eugametos).